The following is a 905-amino-acid chain: Protein translocase subunit SecA (905 aa).

ATP is bound by residues Gln89, 107-111 (GEGKT), and Asp502. 4 residues coordinate Zn(2+): Cys887, Cys889, Cys898, and His899.

This sequence belongs to the SecA family. In terms of assembly, monomer and homodimer. Part of the essential Sec protein translocation apparatus which comprises SecA, SecYEG and auxiliary proteins SecDF-YajC and YidC. It depends on Zn(2+) as a cofactor.

The protein localises to the cell inner membrane. It localises to the cytoplasm. It catalyses the reaction ATP + H2O + cellular proteinSide 1 = ADP + phosphate + cellular proteinSide 2.. Part of the Sec protein translocase complex. Interacts with the SecYEG preprotein conducting channel. Has a central role in coupling the hydrolysis of ATP to the transfer of proteins into and across the cell membrane, serving both as a receptor for the preprotein-SecB complex and as an ATP-driven molecular motor driving the stepwise translocation of polypeptide chains across the membrane. The protein is Protein translocase subunit SecA of Rhizobium leguminosarum bv. trifolii (strain WSM2304).